The following is a 608-amino-acid chain: Actin-related protein 8 (608 aa).

The segment at 1-20 is disordered; it reads MQRSRASSTSSGRLQASQQV. 272–275 serves as a coordination point for ATP; it reads DIGA.

This sequence belongs to the actin family. ARP8 subfamily. As to quaternary structure, component of the chromatin remodeling Ino80 complex. Exists as monomers and dimers, but the dimer is most probably the biologically relevant form required for stable interactions with histones that exploits the twofold symmetry of the nucleosome core.

Its subcellular location is the nucleus. Its function is as follows. Plays an important role in the functional organization of mitotic chromosomes. Exhibits low basal ATPase activity, and unable to polymerize. Functionally, proposed core component of the chromatin remodeling INO80 complex which is involved in transcriptional regulation, DNA replication and probably DNA repair. Strongly prefer nucleosomes and H3-H4 tetramers over H2A-H2B dimers, suggesting it may act as a nucleosome recognition module within the complex. In Drosophila pseudoobscura pseudoobscura (Fruit fly), this protein is Actin-related protein 8.